Consider the following 79-residue polypeptide: Acyl carrier protein (79 aa).

The Carrier domain maps to 2–77; that stretch reads SDIEQRVKKI…QAIDYAKAHV (76 aa). Residue serine 37 is modified to O-(pantetheine 4'-phosphoryl)serine.

This sequence belongs to the acyl carrier protein (ACP) family. In terms of processing, 4'-phosphopantetheine is transferred from CoA to a specific serine of apo-ACP by AcpS. This modification is essential for activity because fatty acids are bound in thioester linkage to the sulfhydryl of the prosthetic group.

The protein localises to the cytoplasm. It functions in the pathway lipid metabolism; fatty acid biosynthesis. In terms of biological role, carrier of the growing fatty acid chain in fatty acid biosynthesis. This Janthinobacterium sp. (strain Marseille) (Minibacterium massiliensis) protein is Acyl carrier protein.